Here is a 142-residue protein sequence, read N- to C-terminus: MPKYYCDYCDTFLTHDSPSVRKTHNGGRKHKDNVRMFYQKWMEDQAQKLVDQTARAFATNRMHGAVPRTTMGMAPVPPVGHHPMMGGPPGMPMMAPRPFPGPPVGFPGAPGLAPFPGPPMGLAGPPGMPPMMPRPPQQFRPM.

The Matrin-type zinc finger occupies 4–36 (YYCDYCDTFLTHDSPSVRKTHNGGRKHKDNVRM).

It belongs to the U1 small nuclear ribonucleoprotein C family. U1 snRNP is composed of the 7 core Sm proteins B/B', D1, D2, D3, E, F and G that assemble in a heptameric protein ring on the Sm site of the small nuclear RNA to form the core snRNP, and at least 3 U1 snRNP-specific proteins U1-70K, U1-A and U1-C. U1-C interacts with U1 snRNA and the 5' splice-site region of the pre-mRNA.

The protein localises to the nucleus. In terms of biological role, component of the spliceosomal U1 snRNP, which is essential for recognition of the pre-mRNA 5' splice-site and the subsequent assembly of the spliceosome. U1-C is directly involved in initial 5' splice-site recognition for both constitutive and regulated alternative splicing. The interaction with the 5' splice-site seems to precede base-pairing between the pre-mRNA and the U1 snRNA. Stimulates commitment or early (E) complex formation by stabilizing the base pairing of the 5' end of the U1 snRNA and the 5' splice-site region. This Caenorhabditis briggsae protein is U1 small nuclear ribonucleoprotein C.